The chain runs to 98 residues: NADH-ubiquinone oxidoreductase chain 4L (98 aa).

3 helical membrane-spanning segments follow: residues 1 to 21 (MMPI…GTLI), 28 to 48 (STLL…AMLI), and 59 to 79 (APLI…ALLV).

This sequence belongs to the complex I subunit 4L family. Core subunit of respiratory chain NADH dehydrogenase (Complex I) which is composed of 45 different subunits.

It is found in the mitochondrion inner membrane. It carries out the reaction a ubiquinone + NADH + 5 H(+)(in) = a ubiquinol + NAD(+) + 4 H(+)(out). Core subunit of the mitochondrial membrane respiratory chain NADH dehydrogenase (Complex I) which catalyzes electron transfer from NADH through the respiratory chain, using ubiquinone as an electron acceptor. Part of the enzyme membrane arm which is embedded in the lipid bilayer and involved in proton translocation. The protein is NADH-ubiquinone oxidoreductase chain 4L (MT-ND4L) of Petaurus breviceps (Australian sugar glider).